We begin with the raw amino-acid sequence, 412 residues long: Glutamate dehydrogenase (412 aa).

Residue lysine 102 is part of the active site.

It belongs to the Glu/Leu/Phe/Val dehydrogenases family. In roots, stems, leaves and flowers but not in fruits.

The protein resides in the mitochondrion matrix. The catalysed reaction is L-glutamate + NAD(+) + H2O = 2-oxoglutarate + NH4(+) + NADH + H(+). It carries out the reaction L-glutamate + NADP(+) + H2O = 2-oxoglutarate + NH4(+) + NADPH + H(+). The sequence is that of Glutamate dehydrogenase (GDH1) from Solanum lycopersicum (Tomato).